We begin with the raw amino-acid sequence, 181 residues long: Probable nicotinate-nucleotide adenylyltransferase (181 aa).

The protein belongs to the NadD family.

It carries out the reaction nicotinate beta-D-ribonucleotide + ATP + H(+) = deamido-NAD(+) + diphosphate. It participates in cofactor biosynthesis; NAD(+) biosynthesis; deamido-NAD(+) from nicotinate D-ribonucleotide: step 1/1. Its function is as follows. Catalyzes the reversible adenylation of nicotinate mononucleotide (NaMN) to nicotinic acid adenine dinucleotide (NaAD). This is Probable nicotinate-nucleotide adenylyltransferase from Campylobacter jejuni subsp. jejuni serotype O:23/36 (strain 81-176).